A 706-amino-acid polypeptide reads, in one-letter code: Histone deacetylase HDA1 (706 aa).

A compositionally biased stretch (basic and acidic residues) spans 1-24 (MDSVMVKKEVLENPDHDLKRKLEE). Residues 1–36 (MDSVMVKKEVLENPDHDLKRKLEENKEEENSLSTTS) form a disordered region. The interval 67 to 396 (RYHAKIFTSY…ALSVAKVLIG (330 aa)) is histone deacetylase. His206 is an active-site residue.

Belongs to the histone deacetylase family. HD type 2 subfamily.

Its subcellular location is the nucleus. The enzyme catalyses N(6)-acetyl-L-lysyl-[histone] + H2O = L-lysyl-[histone] + acetate. Responsible for the deacetylation of lysine residues on the N-terminal part of the core histones (H2A, H2B, H3 and H4). Histone deacetylation gives a tag for epigenetic repression and plays an important role in transcriptional regulation, cell cycle progression and developmental events. Histone deacetylases act via the formation of large multiprotein complexes. This is Histone deacetylase HDA1 (HDA1) from Saccharomyces cerevisiae (strain ATCC 204508 / S288c) (Baker's yeast).